The sequence spans 298 residues: 3-sulfolactaldehyde reductase (298 aa).

NAD(+)-binding positions include 11–12, aspartate 31, leucine 65, and threonine 96; that span reads QM. Arginine 123 lines the 2,3-dihydroxypropane-1-sulfonate pocket. Lysine 171 is an active-site residue. 174–178 serves as a coordination point for 2,3-dihydroxypropane-1-sulfonate; it reads NNYMS. Position 240 (lysine 240) interacts with NAD(+).

Belongs to the HIBADH-related family. 3-sulfolactaldehyde reductase subfamily. In terms of assembly, homotetramer. Dimer of dimers.

The enzyme catalyses (2S)-3-sulfopropanediol + NAD(+) = (2S)-3-sulfolactaldehyde + NADH + H(+). It carries out the reaction 4-hydroxybutanoate + NAD(+) = succinate semialdehyde + NADH + H(+). Inhibited by the NADH analogs tetrahydro-NADH and hexahydro-NADH. In terms of biological role, reduces 3-sulfolactaldehyde (SLA) to 2,3-dihydroxypropane 1-sulfonate (DHPS). Metabolite profiling studies showed that the enzyme also catalyzes in vitro the NADH-dependent reduction of succinic semialdehyde (SSA) to 4-hydroxybutyrate (GHB), and that it could be involved in the metabolism of SSA, and other potentially toxic intermediates that may accumulate under stress conditions. However, the enzyme exhibits a 42,000-fold greater catalytic efficiency for the reduction of SLA over SSA. Shows no detectable activity on the analogous glycolytic intermediate glyceraldehyde-3-phosphate. In Escherichia coli (strain K12), this protein is 3-sulfolactaldehyde reductase (yihU).